Reading from the N-terminus, the 295-residue chain is MVKRNNNNSINYEINKIIPVQTTKDINSKREKEIHVQIKKINSNRTFVYENIHRHILLVLENFGSTKNLFLVLSDCLATLKGYDSQEYQLQLELQTISDSTTTTTTNTVSTVATASTSKTATSKNVISNIENNTNKSQPLESNDLTPPSSKSSNSSPSTSPSKRVSKSKTRVTKKPNQVISTSSSGETENLTTTSTADTTATTDTADTTDGTNTRTSNTSSDDTTTESTKKRGRPSKIQPDSCYVCRRTFTSYWRKGIFNDQNEDLCNPCGLNYLKKGKKEQISKNQNSIHNILN.

The segment covering 115–126 has biased composition (low complexity); that stretch reads ASTSKTATSKNV. Residues 115–240 are disordered; the sequence is ASTSKTATSK…KRGRPSKIQP (126 aa). Over residues 127 to 145 the composition is skewed to polar residues; it reads ISNIENNTNKSQPLESNDL. Low complexity predominate over residues 146-163; sequence TPPSSKSSNSSPSTSPSK. Over residues 164–174 the composition is skewed to basic residues; sequence RVSKSKTRVTK. Residues 181-227 are compositionally biased toward low complexity; the sequence is STSSSGETENLTTTSTADTTATTDTADTTDGTNTRTSNTSSDDTTTE. The a.T hook DNA-binding region spans 229 to 241; that stretch reads TKKRGRPSKIQPD. A GATA-type zinc finger spans residues 243–270; it reads CYVCRRTFTSYWRKGIFNDQNEDLCNPC.

In Dictyostelium discoideum (Social amoeba), this protein is GATA zinc finger domain-containing protein 23 (gtaW).